A 647-amino-acid polypeptide reads, in one-letter code: MALISLTNGYLSFSDAPLLDHAELHIEPNECVCLVGRNGAGKSTLLKIIAGDVLMDDGKIQYEKDLVVSRLEQDPPRNAQGNIFDYVAEGVGHLTDLLKEYHQISVQLEENYSDQILSQLEQVQAKLEHADGWRFENKINEVLLKLGLNPNTKLSALSGGWLRKAALARALVCDPDVLLLDEPTNHLDVEAIEWLENFLLDFQGSIVFISHDRSFIRKMATRIVDLDRGQLVSYPGNYDLYLTTKEENLRVEALQNELFDKRLAQEEVWIRQGIKARRTRNEGRVRALKVMREERRQRRDVMGTAKLQLDTSSRSGKIVFEMEDVSYEIAGKTLLKDFSTTILRGDKIALVGPNGCGKTTFIKLLLGEIQPTSGKIRCGTKLEIAYFDQYRADLDPEKTVMDNVADGKQDIEINGVKRHVLGYLQDFLFPPKRAMTPVKALSGGERNRLLLAKLLLKPNNLLILDEPTNDLDVETLELLEEILTDYQGTLLIVSHDRQFIDNTATECYLFEGKGHLNKYVGGFFDAKQQQANFWASKAVEEQAKAKKSEPLKEESAVKNDRTSKPKSVKLSYKEQRELEQLPQLLEELETKITVLQAEIADPAFFQQAHDITDAKLKALADTEAELETAFLRWEELEEKKNLVEGKA.

ABC transporter domains follow at residues 1–253 and 320–546; these read MALI…RVEA and FEME…AKAK. Residues 36–43 and 352–359 contribute to the ATP site; these read GRNGAGKS and GPNGCGKT. The span at 545–563 shows a compositional bias: basic and acidic residues; that stretch reads AKKSEPLKEESAVKNDRTS. Positions 545-569 are disordered; sequence AKKSEPLKEESAVKNDRTSKPKSVK. Residues 559–647 are C-terminal domain (CTD), binds DNA; sequence NDRTSKPKSV…EKKNLVEGKA (89 aa).

This sequence belongs to the ABC transporter superfamily. ABCF family. Uup subfamily.

The protein localises to the cytoplasm. The catalysed reaction is ATP + H2O = ADP + phosphate + H(+). In terms of biological role, probably plays a role in ribosome assembly or function. May be involved in resolution of branched DNA intermediates that result from template switching in postreplication gaps. Binds DNA and has ATPase activity. In Haemophilus influenzae (strain ATCC 51907 / DSM 11121 / KW20 / Rd), this protein is ATP-binding protein Uup.